The following is a 215-amino-acid chain: MQAYQREFIRFAIERGVLRFGEFTLKSGRTSPYFFNAGLFNSGSALAQLGRFYASAVIESGLDFDVIFGPAYKGIPLGAATAIALAEQHQRDLPWCFNRKEAKDHGEGGTLVGAPLTGRVLIVDDVITAGTAIREVMQIIQAQNAEAAGVLIALNRQERGQGEGELSAIQEVERDYRMPVISIVSLEQVLEYLADDVQLKQHLPAVQAYREQYGI.

Lys-26 contributes to the 5-phospho-alpha-D-ribose 1-diphosphate binding site. Position 34 to 35 (34 to 35 (FF)) interacts with orotate. 5-phospho-alpha-D-ribose 1-diphosphate is bound by residues 72-73 (YK), Arg-99, Lys-100, Lys-103, His-105, and 124-132 (DDVITAGTA). Residues Thr-128 and Arg-156 each contribute to the orotate site.

The protein belongs to the purine/pyrimidine phosphoribosyltransferase family. PyrE subfamily. Homodimer. Mg(2+) is required as a cofactor.

The catalysed reaction is orotidine 5'-phosphate + diphosphate = orotate + 5-phospho-alpha-D-ribose 1-diphosphate. It functions in the pathway pyrimidine metabolism; UMP biosynthesis via de novo pathway; UMP from orotate: step 1/2. Its function is as follows. Catalyzes the transfer of a ribosyl phosphate group from 5-phosphoribose 1-diphosphate to orotate, leading to the formation of orotidine monophosphate (OMP). The polypeptide is Orotate phosphoribosyltransferase (Stutzerimonas stutzeri (strain A1501) (Pseudomonas stutzeri)).